The primary structure comprises 609 residues: MAAVAAGGLVGKGRDISLAALQRHDPYINRIVDVASQVALYTFGHRANEWEKTDVEGTLFVYTRSASPKHGFTIMNRLSMENRTEPITKDLDFQLQDPFLLYRNARLSIYGIWFYDKEECQRIAELMKNLTQYEQLKAHQGTGAGISPMILNSGEGKEVDILRMLIKAKDEYTKCKTCSEPKKITSSSAIYDNPNLIKPIPVKPSENQQQRIPQPNQTLDPEPQHLSLTALFGKQDKATCQETVEPPQTLHQQQQQQQEKLPIRQGVVRSLSYEEPRRHSPPIEKQLCPAIQKLMVRSADLHPLSELPENRPCENGSTHSAGEFFTGPVRPGSPHNIGTSRGVQNASRTQNLFEKLQSTPGAANKCDPSTPAPASSAALNRSRAPTSVTPQAPGKGLAQPPQAYFNGSLPPQAHGREQSTLPRQTLPISGNQTGSSGVISPQELLKKLQIVQQEQQLHASNRPALAAKFPVLSQSSGTGKPLESWINKTSSTEQQTPLFQVISPQRIPATAAPSLLTSPMVFAQPTSVPPKERESGLLPVGGQEPPAAATSLLLPIQSPEPSMITSSPLTKLQLQEALLYLIQNDDNFLNIIYEAYLFSMTQAAMKKSM.

Residue Ala2 is modified to N-acetylalanine. Ser147 carries the phosphoserine modification. Phosphotyrosine is present on Tyr191. 2 disordered regions span residues 201-222 (PVKP…LDPE) and 243-264 (TVEP…LPIR). A compositionally biased stretch (polar residues) spans 205–219 (SENQQQRIPQPNQTL). Ser272 and Ser333 each carry phosphoserine. Disordered stretches follow at residues 326-345 (TGPV…GVQN) and 359-438 (TPGA…SSGV). A compositionally biased stretch (polar residues) spans 336-345 (NIGTSRGVQN). Positions 368–378 (PSTPAPASSAA) are enriched in low complexity. Thr389 is modified (phosphothreonine). The span at 418–438 (QSTLPRQTLPISGNQTGSSGV) shows a compositional bias: polar residues. A phosphoserine mark is found at Ser440 and Ser503.

This sequence belongs to the DCP1 family. Interacts with DCP1A.

It localises to the cytoplasm. The protein resides in the nucleus. The enzyme catalyses a 5'-end (N(7)-methyl 5'-triphosphoguanosine)-ribonucleoside in mRNA + H2O = N(7)-methyl-GDP + a 5'-end phospho-ribonucleoside in mRNA + 2 H(+). In terms of biological role, may play a role in the degradation of mRNAs, both in normal mRNA turnover and in nonsense-mediated mRNA decay. May remove the 7-methyl guanine cap structure from mRNA molecules, yielding a 5'-phosphorylated mRNA fragment and 7m-GDP. The protein is mRNA-decapping enzyme 1B (DCP1B) of Pongo abelii (Sumatran orangutan).